A 119-amino-acid polypeptide reads, in one-letter code: DNA-directed RNA polymerase subunit omega (119 aa).

It belongs to the RNA polymerase subunit omega family. The RNAP catalytic core consists of 2 alpha, 1 beta, 1 beta' and 1 omega subunit. When a sigma factor is associated with the core the holoenzyme is formed, which can initiate transcription.

It catalyses the reaction RNA(n) + a ribonucleoside 5'-triphosphate = RNA(n+1) + diphosphate. In terms of biological role, promotes RNA polymerase assembly. Latches the N- and C-terminal regions of the beta' subunit thereby facilitating its interaction with the beta and alpha subunits. In Caulobacter sp. (strain K31), this protein is DNA-directed RNA polymerase subunit omega.